The chain runs to 349 residues: Alanine racemase (349 aa).

Catalysis depends on Lys35, which acts as the Proton acceptor; specific for D-alanine. Position 35 is an N6-(pyridoxal phosphate)lysine (Lys35). Arg130 serves as a coordination point for substrate. Tyr244 serves as the catalytic Proton acceptor; specific for L-alanine. Residue Met292 participates in substrate binding.

It belongs to the alanine racemase family. It depends on pyridoxal 5'-phosphate as a cofactor.

It catalyses the reaction L-alanine = D-alanine. It functions in the pathway amino-acid biosynthesis; D-alanine biosynthesis; D-alanine from L-alanine: step 1/1. Functionally, catalyzes the interconversion of L-alanine and D-alanine. May also act on other amino acids. The sequence is that of Alanine racemase (alr) from Cereibacter sphaeroides (strain ATCC 17023 / DSM 158 / JCM 6121 / CCUG 31486 / LMG 2827 / NBRC 12203 / NCIMB 8253 / ATH 2.4.1.) (Rhodobacter sphaeroides).